Reading from the N-terminus, the 143-residue chain is Large ribosomal subunit protein uL11 (143 aa).

The protein belongs to the universal ribosomal protein uL11 family. Part of the ribosomal stalk of the 50S ribosomal subunit. Interacts with L10 and the large rRNA to form the base of the stalk. L10 forms an elongated spine to which L12 dimers bind in a sequential fashion forming a multimeric L10(L12)X complex. One or more lysine residues are methylated.

Functionally, forms part of the ribosomal stalk which helps the ribosome interact with GTP-bound translation factors. This Nitrosomonas europaea (strain ATCC 19718 / CIP 103999 / KCTC 2705 / NBRC 14298) protein is Large ribosomal subunit protein uL11.